The following is a 313-amino-acid chain: Ubiquinone biosynthesis protein COQ4, mitochondrial (313 aa).

Zn(2+)-binding residues include His-197, Asp-198, His-201, and Glu-213. The tract at residues 290 to 313 (QPPDLRELRRKQKKLPEPERENAN) is disordered. Positions 303–313 (KLPEPERENAN) are enriched in basic and acidic residues.

The protein belongs to the COQ4 family. As to quaternary structure, component of a multi-subunit COQ enzyme complex, composed of at least COQ3, COQ4, COQ5, COQ6, COQ7 and COQ9. Zn(2+) is required as a cofactor.

The protein localises to the mitochondrion inner membrane. The catalysed reaction is a 4-hydroxy-3-methoxy-5-(all-trans-polyprenyl)benzoate + H(+) = a 2-methoxy-6-(all-trans-polyprenyl)phenol + CO2. The protein operates within cofactor biosynthesis; ubiquinone biosynthesis. Functionally, lyase that catalyzes the C1-decarboxylation of 4-hydroxy-3-methoxy-5-(all-trans-polyprenyl)benzoic acid into 2-methoxy-6-(all-trans-polyprenyl)phenol during ubiquinone biosynthesis. In Meyerozyma guilliermondii (strain ATCC 6260 / CBS 566 / DSM 6381 / JCM 1539 / NBRC 10279 / NRRL Y-324) (Yeast), this protein is Ubiquinone biosynthesis protein COQ4, mitochondrial.